The primary structure comprises 531 residues: Peptide chain release factor 3 (531 aa).

The 269-residue stretch at 10–278 folds into the tr-type G domain; that stretch reads ARRRTFAIIS…DFVEHAPGPL (269 aa). GTP is bound by residues 19 to 26, 87 to 91, and 141 to 144; these read SHPDAGKT, DTPGH, and NKLD.

The protein belongs to the TRAFAC class translation factor GTPase superfamily. Classic translation factor GTPase family. PrfC subfamily.

Its subcellular location is the cytoplasm. Increases the formation of ribosomal termination complexes and stimulates activities of RF-1 and RF-2. It binds guanine nucleotides and has strong preference for UGA stop codons. It may interact directly with the ribosome. The stimulation of RF-1 and RF-2 is significantly reduced by GTP and GDP, but not by GMP. In Thioalkalivibrio sulfidiphilus (strain HL-EbGR7), this protein is Peptide chain release factor 3.